The following is a 488-amino-acid chain: Prostaglandin E2 receptor EP4 subtype (488 aa).

The Extracellular segment spans residues 1–19 (MSTPGVNSSASLSPDRLNS). Residue N7 is glycosylated (N-linked (GlcNAc...) asparagine). A helical transmembrane segment spans residues 20–43 (PVTIPAVMFIFGVVGNLVAIVVLC). The Cytoplasmic segment spans residues 44 to 55 (KSRKEQKETTFY). The helical transmembrane segment at 56–79 (TLVCGLAVTDLLGTLLVSPVTIAT) threads the bilayer. Over 80 to 96 (YMKGQWPGGQPLCEYST) the chain is Extracellular. A disulfide bridge connects residues C92 and C170. A helical membrane pass occupies residues 97 to 115 (FILLFFSLSGLSIICAMSV). Over 116-135 (ERYLAINHAYFYSHYVDKRL) the chain is Cytoplasmic. Residues 136–160 (AGLTLFAVYASNVLFCALPNMGLGS) form a helical membrane-spanning segment. The Extracellular segment spans residues 161–184 (SRLQYPDTWCFIDWTTNVTAHAAY). The chain crosses the membrane as a helical span at residues 185-211 (SYMYAGFSSFLILATVLCNVLVCGALL). At 212–267 (RMHRQFMRRTSLGTEQHHAAAAASVASRGHPAASPALPRLSDFRRRRSFRRIAGAE) the chain is on the cytoplasmic side. A helical membrane pass occupies residues 268 to 295 (IQMVILLIATSLVVLICSIPLVVRVFVN). Residues 296–312 (QLYQPSLEREVSKNPDL) lie on the Extracellular side of the membrane. The chain crosses the membrane as a helical span at residues 313-332 (QAIRIASVNPILDPWIYILL). Over 333–488 (RKTVLSKAIE…ETLNLSEKCI (156 aa)) the chain is Cytoplasmic. Residues 356 to 376 (RERSGQHCSDSQRTSSAMSGH) are disordered. Residues 361–376 (QHCSDSQRTSSAMSGH) are compositionally biased toward polar residues. A phosphoserine mark is found at S374, S377, S379, and S382. Over residues 437-449 (SETSDSSQGQDSE) the composition is skewed to polar residues. The disordered stretch occupies residues 437–475 (SETSDSSQGQDSESVLLVDEAGGSGRAGPAPKGSSLQVT).

The protein belongs to the G-protein coupled receptor 1 family. As to quaternary structure, interacts with FEM1A. Phosphorylation mediates agonist-mediated desensitization by promoting cytoplasmic retention. High in intestine and in peripheral blood mononuclear cells; low in lung, kidney, thymus, uterus, vasculature and brain. Not found in liver, heart, retina oe skeletal muscle.

It localises to the cell membrane. Receptor for prostaglandin E2 (PGE2). The activity of this receptor is mediated by G(s) proteins that stimulate adenylate cyclase. Has a relaxing effect on smooth muscle. May play an important role in regulating renal hemodynamics, intestinal epithelial transport, adrenal aldosterone secretion, and uterine function. This chain is Prostaglandin E2 receptor EP4 subtype (PTGER4), found in Homo sapiens (Human).